We begin with the raw amino-acid sequence, 564 residues long: Proline--tRNA ligase (564 aa).

This sequence belongs to the class-II aminoacyl-tRNA synthetase family. ProS type 1 subfamily. Homodimer.

It localises to the cytoplasm. The catalysed reaction is tRNA(Pro) + L-proline + ATP = L-prolyl-tRNA(Pro) + AMP + diphosphate. Its function is as follows. Catalyzes the attachment of proline to tRNA(Pro) in a two-step reaction: proline is first activated by ATP to form Pro-AMP and then transferred to the acceptor end of tRNA(Pro). As ProRS can inadvertently accommodate and process non-cognate amino acids such as alanine and cysteine, to avoid such errors it has two additional distinct editing activities against alanine. One activity is designated as 'pretransfer' editing and involves the tRNA(Pro)-independent hydrolysis of activated Ala-AMP. The other activity is designated 'posttransfer' editing and involves deacylation of mischarged Ala-tRNA(Pro). The misacylated Cys-tRNA(Pro) is not edited by ProRS. The chain is Proline--tRNA ligase from Bacillus velezensis (strain DSM 23117 / BGSC 10A6 / LMG 26770 / FZB42) (Bacillus amyloliquefaciens subsp. plantarum).